Consider the following 856-residue polypeptide: DNA mismatch repair protein MutS (856 aa).

623–630 (GPNMSGKS) serves as a coordination point for ATP.

The protein belongs to the DNA mismatch repair MutS family.

This protein is involved in the repair of mismatches in DNA. It is possible that it carries out the mismatch recognition step. This protein has a weak ATPase activity. This Natronomonas pharaonis (strain ATCC 35678 / DSM 2160 / CIP 103997 / JCM 8858 / NBRC 14720 / NCIMB 2260 / Gabara) (Halobacterium pharaonis) protein is DNA mismatch repair protein MutS.